The following is a 102-amino-acid chain: Thioredoxin (102 aa).

The region spanning 1 to 102 (MVKIISSENF…FLTNLINKHA (102 aa)) is the Thioredoxin domain. The cysteines at positions 28 and 31 are disulfide-linked.

Belongs to the thioredoxin family.

Functionally, participates in various redox reactions through the reversible oxidation of its active center dithiol to a disulfide and catalyzes dithiol-disulfide exchange reactions. The sequence is that of Thioredoxin (trxA) from Chlamydia pneumoniae (Chlamydophila pneumoniae).